An 82-amino-acid polypeptide reads, in one-letter code: Antitoxin MazE8 (82 aa).

In terms of assembly, forms a complex with cognate toxin MazF8.

Its function is as follows. Antitoxin component of a type II toxin-antitoxin (TA) system. Its cognate toxin is MazF8. The sequence is that of Antitoxin MazE8 (mazE8) from Mycobacterium tuberculosis (strain ATCC 25618 / H37Rv).